Reading from the N-terminus, the 364-residue chain is DNA polymerase IV (364 aa).

The region spanning 14 to 198 (IIHIDMDAFF…LPIEKFHGVG (185 aa)) is the UmuC domain. Residues Asp18 and Asp116 each contribute to the Mg(2+) site. Glu117 is a catalytic residue.

This sequence belongs to the DNA polymerase type-Y family. Monomer. Requires Mg(2+) as cofactor.

It localises to the cytoplasm. It catalyses the reaction DNA(n) + a 2'-deoxyribonucleoside 5'-triphosphate = DNA(n+1) + diphosphate. Poorly processive, error-prone DNA polymerase involved in untargeted mutagenesis. Copies undamaged DNA at stalled replication forks, which arise in vivo from mismatched or misaligned primer ends. These misaligned primers can be extended by PolIV. Exhibits no 3'-5' exonuclease (proofreading) activity. May be involved in translesional synthesis, in conjunction with the beta clamp from PolIII. The protein is DNA polymerase IV of Streptococcus pyogenes serotype M28 (strain MGAS6180).